We begin with the raw amino-acid sequence, 350 residues long: S-adenosylmethionine:tRNA ribosyltransferase-isomerase (350 aa).

This sequence belongs to the QueA family. Monomer.

The protein localises to the cytoplasm. It carries out the reaction 7-aminomethyl-7-carbaguanosine(34) in tRNA + S-adenosyl-L-methionine = epoxyqueuosine(34) in tRNA + adenine + L-methionine + 2 H(+). It functions in the pathway tRNA modification; tRNA-queuosine biosynthesis. Functionally, transfers and isomerizes the ribose moiety from AdoMet to the 7-aminomethyl group of 7-deazaguanine (preQ1-tRNA) to give epoxyqueuosine (oQ-tRNA). The chain is S-adenosylmethionine:tRNA ribosyltransferase-isomerase from Vibrio vulnificus (strain YJ016).